A 124-amino-acid polypeptide reads, in one-letter code: Probable S-adenosyl-L-methionine-binding protein VNG_1115H (124 aa).

The region spanning 3–124 (ATPIGYADTR…PVLDLKPALD (122 aa)) is the TsaA-like domain. S-adenosyl-L-methionine-binding positions include 20 to 22 (PRQ), 58 to 59 (DD), Arg78, and 111 to 114 (AHGS).

The protein belongs to the tRNA methyltransferase O family.

This Halobacterium salinarum (strain ATCC 700922 / JCM 11081 / NRC-1) (Halobacterium halobium) protein is Probable S-adenosyl-L-methionine-binding protein VNG_1115H.